The sequence spans 572 residues: Putative carbohydrate transport ATP-binding protein MPN_258 (572 aa).

2 consecutive ABC transporter domains span residues 6–253 (FRME…MGKE) and 327–572 (RFIR…LIMQ). Residue 40-47 (GENGAGKS) coordinates ATP.

It belongs to the ABC transporter superfamily.

Its subcellular location is the cell membrane. Functionally, part of the ABC transporter complex involved in carbohydrates import. Probably responsible for energy coupling to the transport system. This Mycoplasma pneumoniae (strain ATCC 29342 / M129 / Subtype 1) (Mycoplasmoides pneumoniae) protein is Putative carbohydrate transport ATP-binding protein MPN_258.